A 279-amino-acid polypeptide reads, in one-letter code: Formamidopyrimidine-DNA glycosylase (279 aa).

The active-site Schiff-base intermediate with DNA is proline 2. Glutamate 3 serves as the catalytic Proton donor. Lysine 57 acts as the Proton donor; for beta-elimination activity in catalysis. DNA is bound by residues histidine 90, arginine 109, and arginine 151. Residues 236-270 form an FPG-type zinc finger; sequence FVYGRTGQPCRVCQTPIAVLRLGQRSTFYCPACQQ. Arginine 260 functions as the Proton donor; for delta-elimination activity in the catalytic mechanism.

It belongs to the FPG family. In terms of assembly, monomer. The cofactor is Zn(2+).

The enzyme catalyses Hydrolysis of DNA containing ring-opened 7-methylguanine residues, releasing 2,6-diamino-4-hydroxy-5-(N-methyl)formamidopyrimidine.. It catalyses the reaction 2'-deoxyribonucleotide-(2'-deoxyribose 5'-phosphate)-2'-deoxyribonucleotide-DNA = a 3'-end 2'-deoxyribonucleotide-(2,3-dehydro-2,3-deoxyribose 5'-phosphate)-DNA + a 5'-end 5'-phospho-2'-deoxyribonucleoside-DNA + H(+). Functionally, involved in base excision repair of DNA damaged by oxidation or by mutagenic agents. Acts as a DNA glycosylase that recognizes and removes damaged bases. Has a preference for oxidized purines, such as 7,8-dihydro-8-oxoguanine (8-oxoG). Has AP (apurinic/apyrimidinic) lyase activity and introduces nicks in the DNA strand. Cleaves the DNA backbone by beta-delta elimination to generate a single-strand break at the site of the removed base with both 3'- and 5'-phosphates. This chain is Formamidopyrimidine-DNA glycosylase, found in Methylobacillus flagellatus (strain ATCC 51484 / DSM 6875 / VKM B-1610 / KT).